Consider the following 770-residue polypeptide: U3 small nucleolar RNA-associated protein 14 homolog A (770 aa).

Residues 1–17 (MNANQAAESNLLASNQQ) show a composition bias toward polar residues. Positions 1–65 (MNANQAAESN…GKDRQKLADR (65 aa)) are disordered. Phosphoserine occurs at positions 30, 32, and 53. Residues 41-68 (ERKHQKLLESISSLNGKDRQKLADRSEA) adopt a coiled-coil conformation. The segment covering 56–65 (GKDRQKLADR) has biased composition (basic and acidic residues). Phosphoserine occurs at positions 78 and 82. Residue Thr-206 is modified to Phosphothreonine. 2 coiled-coil regions span residues 217–291 (SLEE…DKAR) and 318–348 (LEAR…EEEG). Disordered regions lie at residues 334 to 361 (LTQK…LVPD), 392 to 455 (KDLE…SSQE), and 467 to 505 (LRTE…RPER). Acidic residues-rich tracts occupy residues 343-358 (ESEE…EEPL) and 396-410 (DPAE…ESEE). Residues Ser-406 and Ser-408 each carry the phosphoserine modification. Basic and acidic residues predominate over residues 411 to 444 (EKAVVEEETLLKEFEERRSLRQKSELNHMAEPVH). Lys-449 participates in a covalent cross-link: Glycyl lysine isopeptide (Lys-Gly) (interchain with G-Cter in SUMO2). At Ser-453 the chain carries Phosphoserine. Ser-567 carries the post-translational modification Phosphoserine. Residue Arg-588 is modified to Citrulline. Residue Lys-732 forms a Glycyl lysine isopeptide (Lys-Gly) (interchain with G-Cter in SUMO2) linkage.

This sequence belongs to the UTP14 family. As to quaternary structure, interacts with DHX37. Citrullinated by PADI4.

The protein localises to the nucleus. It localises to the nucleolus. Functionally, may be required for ribosome biogenesis. This Bos taurus (Bovine) protein is U3 small nucleolar RNA-associated protein 14 homolog A (UTP14A).